We begin with the raw amino-acid sequence, 204 residues long: MAGSRRKSPGITPDILLRAYSIGLFPMAESADDPEIFWVEPELRGVLPLDHFHISKSLAKTVRRNPFEIRFDHAFESVIAACAEETSGRPSTWINQTIRSLYSTLFDMGHAHTVEAWHGDELVGGLYGVSLGSAFFGESMFSRRTDASKICLVHLVDRLRNKGFTLLDTQFTTEHLKTFGAIDVPKADYALLLAAAMESPHLKF.

It belongs to the L/F-transferase family.

It is found in the cytoplasm. The catalysed reaction is N-terminal L-lysyl-[protein] + L-leucyl-tRNA(Leu) = N-terminal L-leucyl-L-lysyl-[protein] + tRNA(Leu) + H(+). It catalyses the reaction N-terminal L-arginyl-[protein] + L-leucyl-tRNA(Leu) = N-terminal L-leucyl-L-arginyl-[protein] + tRNA(Leu) + H(+). The enzyme catalyses L-phenylalanyl-tRNA(Phe) + an N-terminal L-alpha-aminoacyl-[protein] = an N-terminal L-phenylalanyl-L-alpha-aminoacyl-[protein] + tRNA(Phe). Functions in the N-end rule pathway of protein degradation where it conjugates Leu, Phe and, less efficiently, Met from aminoacyl-tRNAs to the N-termini of proteins containing an N-terminal arginine or lysine. This chain is Leucyl/phenylalanyl-tRNA--protein transferase, found in Rhizobium etli (strain CIAT 652).